Here is a 103-residue protein sequence, read N- to C-terminus: Small ribosomal subunit protein uS10 (103 aa).

Belongs to the universal ribosomal protein uS10 family. Part of the 30S ribosomal subunit.

Involved in the binding of tRNA to the ribosomes. In Hydrogenovibrio crunogenus (strain DSM 25203 / XCL-2) (Thiomicrospira crunogena), this protein is Small ribosomal subunit protein uS10.